A 271-amino-acid polypeptide reads, in one-letter code: uncharacterized protein (271 aa).

The interval 1-202 (MLNSPGTRRP…APSSALSHQG (202 aa)) is disordered. Basic and acidic residues predominate over residues 10-23 (PVKEAQKYGEDSQK). Low complexity-rich tracts occupy residues 33–50 (RSSV…SSSP) and 59–73 (GRPS…TSAP). The segment covering 92 to 101 (TRSSANQLPQ) has biased composition (polar residues). The span at 121-142 (LRRRSHGDRCVPRSRRRPRPRP) shows a compositional bias: basic residues.

This is an uncharacterized protein from Homo sapiens (Human).